We begin with the raw amino-acid sequence, 160 residues long: Phosphopantetheine adenylyltransferase (160 aa).

Residue threonine 9 coordinates substrate. ATP contacts are provided by residues 9 to 10 (TF) and histidine 17. Positions 41, 73, and 87 each coordinate substrate. Residues 88 to 90 (GLR), glutamate 98, and 123 to 129 (LSYISST) contribute to the ATP site.

Belongs to the bacterial CoaD family. Homohexamer. Mg(2+) serves as cofactor.

It is found in the cytoplasm. The catalysed reaction is (R)-4'-phosphopantetheine + ATP + H(+) = 3'-dephospho-CoA + diphosphate. It participates in cofactor biosynthesis; coenzyme A biosynthesis; CoA from (R)-pantothenate: step 4/5. Its function is as follows. Reversibly transfers an adenylyl group from ATP to 4'-phosphopantetheine, yielding dephospho-CoA (dPCoA) and pyrophosphate. This chain is Phosphopantetheine adenylyltransferase, found in Marinobacter nauticus (strain ATCC 700491 / DSM 11845 / VT8) (Marinobacter aquaeolei).